A 420-amino-acid chain; its full sequence is L-rhamnose isomerase (420 aa).

Residues His262, Asp294, and Asp296 each coordinate Mn(2+).

This sequence belongs to the rhamnose isomerase family. As to quaternary structure, homotetramer. The cofactor is Mn(2+).

The protein resides in the cytoplasm. It carries out the reaction L-rhamnopyranose = L-rhamnulose. It functions in the pathway carbohydrate degradation; L-rhamnose degradation; glycerone phosphate from L-rhamnose: step 1/3. Catalyzes the interconversion of L-rhamnose and L-rhamnulose. The protein is L-rhamnose isomerase of Pectobacterium carotovorum subsp. carotovorum (strain PC1).